We begin with the raw amino-acid sequence, 425 residues long: Orexin/Hypocretin receptor type 1 (425 aa).

Residues 1 to 24 (MEPSATPGAQMGVPPGSREPSPVP) are disordered. Over 1–46 (MEPSATPGAQMGVPPGSREPSPVPPDYEDEFLRYLWRDYLYPKQYE) the chain is Extracellular. Residues 26 to 41 (DYEDEFLRYLWRDYLY) form a required for response to orexin-A region. Residues 47 to 67 (WVLIAAYVAVFVVALVGNTLV) form a helical membrane-spanning segment. The Cytoplasmic segment spans residues 68 to 82 (CLAVWRNHHMRTVTN). A helical transmembrane segment spans residues 83-105 (YFIVNLSLADVLVTAICLPASLL). Residues 106–119 (VDITESWLFGHALC) are Extracellular-facing. A disulfide bond links Cys-119 and Cys-202. A helical transmembrane segment spans residues 120–140 (KVIPYLQAVSVSVAVLTLSFI). Topologically, residues 141 to 160 (ALDRWYAICHPLLFKSTARR) are cytoplasmic. A helical transmembrane segment spans residues 161-182 (ARGSILGIWAVSLAIMVPQAAV). At 183–213 (MECSSVLPELANRTRLFSVCDERWADDLYPK) the chain is on the extracellular side. The N-linked (GlcNAc...) asparagine glycan is linked to Asn-194. The chain crosses the membrane as a helical span at residues 214 to 235 (IYHSCFFIVTYLAPLGLMAMAY). Residues 236–298 (FQIFRKLWGR…QMRARRKTAK (63 aa)) are Cytoplasmic-facing. A helical transmembrane segment spans residues 299-321 (MLMVVLLVFALCYLPISVLNVLK). A suvorexant-binding site is contributed by Asn-318. The Extracellular segment spans residues 322-336 (RVFGMFRQASDREAV). The helical transmembrane segment at 337-360 (YACFTFSHWLVYANSAANPIIYNF) threads the bilayer. Residues 361-425 (LSGKFREQFK…VLTSVTTVLP (65 aa)) lie on the Cytoplasmic side of the membrane.

Belongs to the G-protein coupled receptor 1 family.

Its subcellular location is the cell membrane. Moderately selective excitatory receptor for orexin-A and, with a lower affinity, for orexin-B neuropeptide. Triggers an increase in cytoplasmic Ca(2+) levels in response to orexin-A binding. The polypeptide is Orexin/Hypocretin receptor type 1 (Homo sapiens (Human)).